The following is a 269-amino-acid chain: uncharacterized protein (269 aa).

6 helical membrane-spanning segments follow: residues Leu21–Thr43, Leu48–Ile70, Tyr121–Phe143, Phe147–Ile166, Ser205–Phe227, and Phe242–Trp264.

It localises to the cell membrane. This is an uncharacterized protein from Aquifex aeolicus (strain VF5).